The following is a 449-amino-acid chain: Type 3 secretion system ATPase (449 aa).

178 to 183 (GCGKTT) contributes to the ATP binding site.

It belongs to the ATPase alpha/beta chains family. T3SS ATPase subfamily. In terms of assembly, the core secretion machinery of the T3SS is composed of approximately 20 different proteins, including cytoplasmic components, a base, an export apparatus and a needle. This subunit is part of the cytosolic complex. Forms homododecamers. Comprises two hexameric rings that are probably stacked face-to-face by the association of their C-terminal domains. Also present as monomer and homohexamer in solution.

It localises to the cytoplasm. The catalysed reaction is ATP + H2O + cellular proteinSide 1 = ADP + phosphate + cellular proteinSide 2.. Its activity is regulated as follows. Oligomerization increases ATPase activity. Its function is as follows. ATPase component of the type III secretion system (T3SS), also called injectisome, which is used to inject bacterial effector proteins into eukaryotic host cells. Acts as a molecular motor to provide the energy that is required for the export of proteins. Required for type III secretion apparatus (T3SA) formation, proper protein secretion, host cell invasion and virulence. May play a critical role in T3SS substrate recognition, disassembly of the effector/chaperone complex and unfolding of the effector in an ATP-dependent manner prior to secretion. This is Type 3 secretion system ATPase from Pseudomonas savastanoi pv. phaseolicola (Pseudomonas syringae pv. phaseolicola).